We begin with the raw amino-acid sequence, 311 residues long: MAAPRAPRALTAAAPGSGKAKLTHPGKAILAGGLAGGIEICITFPTEYVKTQLQLDERANPPRYRGIGDCVRQTVRSHGVLGLYRGLSSLLYGSIPKAAVRFGMFEFLSNHMRDAQGRLDSRRGLLCGLGAGVAEAVVVVCPMETVKVKFIHDQTSSNPKYRGFFHGVREIVREQGLKGTYQGLTATVLKQGSNQAIRFFVMTSLRNWYQGDNPNKPMNPLITGVFGAVAGAASVFGNTPLDVIKTRMQGLEAHKYRNTLDCGVQILKNEGPKAFYKGTVPRLGRVCLDVAIVFVIYDEVVKLLNKVWKTD.

Residues 1-13 (MAAPRAPRALTAA) constitute a propeptide, removed in mature form. Solcar repeat units follow at residues 23 to 111 (THPG…LSNH), 122 to 208 (RRGL…LRNW), and 218 to 303 (MNPL…VVKL). Transmembrane regions (helical) follow at residues 29–46 (ILAG…TFPT), 86–105 (GLSS…FGMF), and 129–143 (LGAG…VCPM). S156 is modified (phosphoserine). A run of 3 helical transmembrane segments spans residues 183 to 202 (GLTA…FFVM), 224 to 241 (GVFG…NTPL), and 278 to 297 (GTVP…FVIY).

Belongs to the mitochondrial carrier (TC 2.A.29) family. Post-translationally, possesses a short cleavable presequence, which, however, is found to be dispensable both for targeting to mitochondria and insertion into the inner membrane. However, the presequence is required to keep SLC25A1 in a soluble state and thus in an import-competent state. Mature SLC25A1 lacking the presequence is prone to aggregation.

It localises to the mitochondrion inner membrane. It carries out the reaction (S)-malate(in) + citrate(out) = (S)-malate(out) + citrate(in). It catalyses the reaction citrate(out) + succinate(in) = citrate(in) + succinate(out). The catalysed reaction is D-threo-isocitrate(in) + citrate(out) = D-threo-isocitrate(out) + citrate(in). The enzyme catalyses cis-aconitate(in) + citrate(out) = cis-aconitate(out) + citrate(in). It carries out the reaction trans-aconitate(in) + citrate(out) = trans-aconitate(out) + citrate(in). It catalyses the reaction phosphoenolpyruvate(in) + citrate(out) = phosphoenolpyruvate(out) + citrate(in). The catalysed reaction is maleate(in) + citrate(out) = maleate(out) + citrate(in). Functionally, mitochondrial electroneutral antiporter that exports citrate from the mitochondria into the cytosol in exchange for malate. Also able to mediate the exchange of citrate for isocitrate, phosphoenolpyruvate, cis-aconitate and to a lesser extent trans-aconitate, maleate and succinate. In the cytoplasm, citrate plays important roles in fatty acid and sterol synthesis, regulation of glycolysis, protein acetylation, and other physiopathological processes. In Rattus norvegicus (Rat), this protein is Tricarboxylate transport protein, mitochondrial (Slc25a1).